The chain runs to 156 residues: Small ribosomal subunit protein uS7 (156 aa).

This sequence belongs to the universal ribosomal protein uS7 family. Part of the 30S ribosomal subunit. Contacts proteins S9 and S11.

Functionally, one of the primary rRNA binding proteins, it binds directly to 16S rRNA where it nucleates assembly of the head domain of the 30S subunit. Is located at the subunit interface close to the decoding center, probably blocks exit of the E-site tRNA. The polypeptide is Small ribosomal subunit protein uS7 (Corynebacterium jeikeium (strain K411)).